Here is a 194-residue protein sequence, read N- to C-terminus: Cysteine and glycine-rich protein 2 (194 aa).

Residues 10–61 (CGACGRTVYHAEEVQCDGRSFHRCCFLCMVCRKNLDSTTVAIHDAEVYCKSC) enclose the LIM zinc-binding 1 domain. A Nuclear localization signal motif is present at residues 64–69 (KKYGPK). A disordered region spans residues 85–110 (GERLGIKPESSPSPHRPTTNPNTSKF). Residues 94–110 (SSPSPHRPTTNPNTSKF) are compositionally biased toward polar residues. An LIM zinc-binding 2 domain is found at 120 to 171 (CSRCGDSVYAAEKVIGAGKPWHKNCFRCAKCGKSLESTTLTEKEGEIYCKGC).

The protein localises to the nucleus. Its function is as follows. Interacts with zyxin. May be a component of a signal transduction pathway that mediates adhesion-stimulated changes in gene expression. Totally down-regulated in transformed cells. This is Cysteine and glycine-rich protein 2 (CSRP2) from Coturnix japonica (Japanese quail).